A 118-amino-acid polypeptide reads, in one-letter code: uncharacterized protein (118 aa).

The next 4 membrane-spanning stretches (helical) occupy residues 12-32 (IISLVSLSVIFGAMLSGFATF), 39-59 (LMPHFASLMIAFILTLASLFI), 63-83 (IIGYLAIAFQVITPLTVCPTI), and 98-118 (SAHLALMGMMFILALGNVILF).

The protein localises to the cell membrane. This is an uncharacterized protein from Methanocaldococcus jannaschii (strain ATCC 43067 / DSM 2661 / JAL-1 / JCM 10045 / NBRC 100440) (Methanococcus jannaschii).